The sequence spans 732 residues: DNA ligase (732 aa).

Residues 47–51, 96–97, and glutamate 133 each bind NAD(+); these read DAEYD and SI. The N6-AMP-lysine intermediate role is filled by lysine 135. Positions 156, 196, 317, and 341 each coordinate NAD(+). Residues cysteine 470, cysteine 473, cysteine 488, and cysteine 494 each contribute to the Zn(2+) site. The BRCT domain maps to 653–732; sequence RATLPLAGKT…AGMLALLQGR (80 aa).

It belongs to the NAD-dependent DNA ligase family. LigA subfamily. It depends on Mg(2+) as a cofactor. Mn(2+) is required as a cofactor.

It catalyses the reaction NAD(+) + (deoxyribonucleotide)n-3'-hydroxyl + 5'-phospho-(deoxyribonucleotide)m = (deoxyribonucleotide)n+m + AMP + beta-nicotinamide D-nucleotide.. Its function is as follows. DNA ligase that catalyzes the formation of phosphodiester linkages between 5'-phosphoryl and 3'-hydroxyl groups in double-stranded DNA using NAD as a coenzyme and as the energy source for the reaction. It is essential for DNA replication and repair of damaged DNA. The protein is DNA ligase of Paracidovorax citrulli (strain AAC00-1) (Acidovorax citrulli).